Reading from the N-terminus, the 489-residue chain is Serine/threonine-protein kinase dyf-5 (489 aa).

Residues 11–291 (YLMTKRLGDG…ANQSLRYKYF (281 aa)) form the Protein kinase domain. ATP contacts are provided by residues 17 to 25 (LGDGTFGEV) and Lys-40. Asp-132 serves as the catalytic Proton acceptor. Disordered regions lie at residues 366–385 (EKSDNKPLGPTKSNEAKPTA) and 452–489 (QTGPTVSNQTNNHSANNSHSPNKMSNTGRVDWAAKYVK). Over residues 458-473 (SNQTNNHSANNSHSPN) the composition is skewed to low complexity.

The protein belongs to the protein kinase superfamily. CMGC Ser/Thr protein kinase family. RCK subfamily. The cofactor is Mg(2+). As to expression, expressed in head neurons including amphid and labial sensory neurons and 3 pairs of neurons in the tail including phasmid sensory neurons. In male, expressed in the tail including the sensory rays and the spicule.

It is found in the perikaryon. Its subcellular location is the cell projection. It localises to the dendrite. The protein resides in the axon. The protein localises to the cilium. It carries out the reaction L-seryl-[protein] + ATP = O-phospho-L-seryl-[protein] + ADP + H(+). The catalysed reaction is L-threonyl-[protein] + ATP = O-phospho-L-threonyl-[protein] + ADP + H(+). Functionally, serine/threonine-protein kinase which is required for ciliogenesis. Regulates the length and the morphology of sensory neuron cilia. In addition, plays a role in the anterograde intraflagellar transport (IFT) in the cilia by regulating the undocking of kinesin-II motor complex (composed of klp-11, klp-20 and kap-1) before reaching the distal segment and the docking of kinesin motor osm-3 onto IFT cargos. This Caenorhabditis elegans protein is Serine/threonine-protein kinase dyf-5.